The primary structure comprises 471 residues: Sestrin-2 (471 aa).

Met-1 is subject to N-acetylmethionine. Residues 57 to 230 (GLEALMSSGR…APSPPSEQST (174 aa)) are N-terminal domain; mediates the alkylhydroperoxide reductase activity. Cys-116 functions as the Cysteine sulfenic acid (-SOH) intermediate in the catalytic mechanism. Residue Lys-166 forms a Glycyl lysine isopeptide (Lys-Gly) (interchain with G-Cter in ubiquitin) linkage. The disordered stretch occupies residues 212–241 (DPEGSPAPQAPSPPSEQSTPPSRDSLNHSG). Ser-240 carries the post-translational modification Phosphoserine. Positions 299–471 (ANPDMLCFVE…ALRAITRYMT (173 aa)) are C-terminal domain; mediates TORC1 regulation. L-leucine is bound by residues 365–368 (TYNT), Thr-377, and Glu-442.

Belongs to the sestrin family. In terms of assembly, interacts with the GATOR2 complex which is composed of MIOS, SEC13, SEH1L, WDR24 and WDR59; the interaction is negatively regulated by leucine. Conveys leucine availability via direct interaction with SEH1L and WDR24 components of the GATOR2 complex. Interacts with RRAGA, RRAGB, RRAGC and RRAGD; may function as a guanine nucleotide dissociation inhibitor for RRAGs and regulate them. May interact with the TORC2 complex. Interacts with KEAP1, RBX1, SQSTM and ULK1; to regulate the degradation of KEAP1. May also associate with the complex composed of TSC1, TSC2 and the AMP-responsive protein kinase/AMPK to regulate TORC1 signaling. May interact with PRDX1. In terms of processing, phosphorylated by ULK1 at multiple sites. Ubiquitinated at Lys-166 by RNF167 via 'Lys-63'-linked polyubiquitination in response to leucine deprivation: ubiquitination promotes SESN2-interaction with the GATOR2 complex, leading to inhibit the TORC1 signaling pathway. Deubiquitinated at Lys-166 by STAMBPL1, promoting the TORC1 signaling pathway. Ubiquitinated by RNF186; ubiquitination mediates proteasomal degradation.

The protein resides in the cytoplasm. It catalyses the reaction a hydroperoxide + L-cysteinyl-[protein] = S-hydroxy-L-cysteinyl-[protein] + an alcohol. Functionally, functions as an intracellular leucine sensor that negatively regulates the mTORC1 signaling pathway through the GATOR complex. In absence of leucine, binds the GATOR subcomplex GATOR2 and prevents mTORC1 signaling. Binding of leucine to SESN2 disrupts its interaction with GATOR2 thereby activating the TORC1 signaling pathway. This stress-inducible metabolic regulator also plays a role in protection against oxidative and genotoxic stresses. May negatively regulate protein translation in response to endoplasmic reticulum stress, via mTORC1. May positively regulate the transcription by NFE2L2 of genes involved in the response to oxidative stress by facilitating the SQSTM1-mediated autophagic degradation of KEAP1. May also mediate TP53 inhibition of TORC1 signaling upon genotoxic stress. Moreover, may prevent the accumulation of reactive oxygen species (ROS) through the alkylhydroperoxide reductase activity born by the N-terminal domain of the protein. Was originally reported to contribute to oxidative stress resistance by reducing PRDX1. However, this could not be confirmed. The chain is Sestrin-2 from Bos taurus (Bovine).